We begin with the raw amino-acid sequence, 305 residues long: Sulfate adenylyltransferase subunit 2 (305 aa).

The protein belongs to the PAPS reductase family. CysD subfamily. In terms of assembly, heterodimer composed of CysD, the smaller subunit, and CysN.

The catalysed reaction is sulfate + ATP + H(+) = adenosine 5'-phosphosulfate + diphosphate. The protein operates within sulfur metabolism; hydrogen sulfide biosynthesis; sulfite from sulfate: step 1/3. In terms of biological role, with CysN forms the ATP sulfurylase (ATPS) that catalyzes the adenylation of sulfate producing adenosine 5'-phosphosulfate (APS) and diphosphate, the first enzymatic step in sulfur assimilation pathway. APS synthesis involves the formation of a high-energy phosphoric-sulfuric acid anhydride bond driven by GTP hydrolysis by CysN coupled to ATP hydrolysis by CysD. This chain is Sulfate adenylyltransferase subunit 2, found in Pseudomonas syringae pv. tomato (strain ATCC BAA-871 / DC3000).